The sequence spans 440 residues: MDQLAHHYRAHIAELNRRVAEILSREALSGLVIHSGQPHRMFLDDINYPFKANPHFKAWLPVLDNPNCWLVVNGRDKPQLIFYRPVDFWHKVSDVPDMFWTEYFDIKLLTKADKVAEFLPTDIANWAYLGEHLDVAEVLGFTSRNPDAVMSYLHYHRTTKTEYELECMRRANQIAVQGHLAAKNAFYNGASEFEIQQHYLSAVGQSENEVPYGNIIALNQNAAILHYTALEHQSPAKRLSFLIDAGASYFGYASDITRTYAFEKNRFDELITAMNKAQLELIDMMRPGVRYPDLHLATHAKVAQMLLDFDLATGDVQGLVDQGITSAFFPHGLGHMLGLQVHDVGGFSHDERGTHIAAPEAHPFLRCTRILAPNQVLTMEPGLYIIDTLLNELKQDSRGQQINWQTVDELRPFGGIRIEDNVIVHQDRNENMTRELGLTD.

Mn(2+)-binding residues include aspartate 244, aspartate 255, histidine 335, glutamate 380, and glutamate 419.

Belongs to the peptidase M24B family. Bacterial-type prolidase subfamily. It depends on Mn(2+) as a cofactor.

The enzyme catalyses Xaa-L-Pro dipeptide + H2O = an L-alpha-amino acid + L-proline. Splits dipeptides with a prolyl residue in the C-terminal position. In Shewanella baltica (strain OS223), this protein is Xaa-Pro dipeptidase.